Consider the following 342-residue polypeptide: tRNA dimethylallyltransferase (342 aa).

Polar residues predominate over residues 1–13 (MNDTTAKTLNCSP). The tract at residues 1–21 (MNDTTAKTLNCSPASRDGFPE) is disordered. Residue 40–47 (GPTGVGKT) participates in ATP binding. Residue 42–47 (TGVGKT) participates in substrate binding. Interaction with substrate tRNA regions lie at residues 65-68 (DSMQ) and 189-193 (QRILR).

Belongs to the IPP transferase family. As to quaternary structure, monomer. Mg(2+) serves as cofactor.

It catalyses the reaction adenosine(37) in tRNA + dimethylallyl diphosphate = N(6)-dimethylallyladenosine(37) in tRNA + diphosphate. Functionally, catalyzes the transfer of a dimethylallyl group onto the adenine at position 37 in tRNAs that read codons beginning with uridine, leading to the formation of N6-(dimethylallyl)adenosine (i(6)A). The chain is tRNA dimethylallyltransferase from Syntrophobacter fumaroxidans (strain DSM 10017 / MPOB).